A 518-amino-acid polypeptide reads, in one-letter code: Tyrosine/DOPA decarboxylase 1 (518 aa).

N6-(pyridoxal phosphate)lysine is present on Lys321.

The protein belongs to the group II decarboxylase family. Homodimer. Pyridoxal 5'-phosphate is required as a cofactor. Predominantly expressed in the roots.

The catalysed reaction is L-tyrosine + H(+) = tyramine + CO2. The enzyme catalyses L-dopa + H(+) = dopamine + CO2. It carries out the reaction 5-hydroxy-L-tryptophan + H(+) = serotonin + CO2. Functionally, marginally higher substrate specificity for L-DOPA over L-tyrosine. In Papaver somniferum (Opium poppy), this protein is Tyrosine/DOPA decarboxylase 1 (TYDC1).